The following is a 175-amino-acid chain: PE-PGRS family protein PE_PGRS8 (175 aa).

The 93-residue stretch at 1–93 (MSFVIAAPEA…AGSYAAAEAA (93 aa)) folds into the PE domain.

Belongs to the mycobacterial PE family. PGRS subfamily.

It localises to the secreted. It is found in the cell wall. Its subcellular location is the cell surface. This Mycobacterium tuberculosis (strain ATCC 25618 / H37Rv) protein is PE-PGRS family protein PE_PGRS8.